A 147-amino-acid chain; its full sequence is D-aminoacyl-tRNA deacylase (147 aa).

Residues 136-137 (GP) carry the Gly-cisPro motif, important for rejection of L-amino acids motif.

Belongs to the DTD family. In terms of assembly, homodimer.

The protein resides in the cytoplasm. It carries out the reaction glycyl-tRNA(Ala) + H2O = tRNA(Ala) + glycine + H(+). It catalyses the reaction a D-aminoacyl-tRNA + H2O = a tRNA + a D-alpha-amino acid + H(+). In terms of biological role, an aminoacyl-tRNA editing enzyme that deacylates mischarged D-aminoacyl-tRNAs. Also deacylates mischarged glycyl-tRNA(Ala), protecting cells against glycine mischarging by AlaRS. Acts via tRNA-based rather than protein-based catalysis; rejects L-amino acids rather than detecting D-amino acids in the active site. By recycling D-aminoacyl-tRNA to D-amino acids and free tRNA molecules, this enzyme counteracts the toxicity associated with the formation of D-aminoacyl-tRNA entities in vivo and helps enforce protein L-homochirality. The sequence is that of D-aminoacyl-tRNA deacylase from Sulfurihydrogenibium sp. (strain YO3AOP1).